Reading from the N-terminus, the 521-residue chain is MSELAAALTAAMRTGGSDLVVFDRESAAWRRHRWPEVHGLAEGIAAWLLDRDRPAALGLVGEPTLEFVAAIVGAWLAGAGVSILPGPVRGAEGRRWADTTLTRFAGIGVRTVLSHGSHLDALQALDPSRPDEMVVEDLAVAANTGRRCPEPPAPHANPAILQGTAGSTGTPKTAALSPDAVLANLRGLNARLGVTPADVGCSWLPLYHDMGLSFLLASALGGMSLWLAPTSAFTASPFRWLAWLSESRATITAAPNFAYNLVGKYARRVSGVDLGALRVAINGGEPVDCAGFERFTTAMAPFGFDAGAATPSYGLAEATCAVSVPAPGTGLRFADVSDETGTRRHAVLGAPIPGTEIRISPRHDAPDGIGEIEIRGASMMDGYLGHAPIDHQNWFPTGDLGFFSDDGLVVCGRAKELITLAGRNIFPTEIETVAAQVPGVREGAVVALGTGENSARPGLIIAAEFAGRDRAGARAEVIQRVASVCGVVPSDVIFMAPGSLPRTSSGKLRRLDVRRSLEAVD.

Positions 146-172 (RRCPEPPAPHANPAILQGTAGSTGTPK) are disordered.

The protein belongs to the ATP-dependent AMP-binding enzyme family.

The catalysed reaction is a long-chain fatty acid + holo-[ACP] + ATP = a long-chain fatty acyl-[ACP] + AMP + diphosphate. It carries out the reaction a medium-chain fatty acid + holo-[ACP] + ATP = a medium-chain fatty acyl-[ACP] + AMP + diphosphate. It participates in siderophore biosynthesis; mycobactin biosynthesis. Activates lipidic moieties required for mycobactin biosynthesis. Converts medium- to long-chain aliphatic fatty acids into acyl adenylate, which is further transferred on to the phosphopantetheine arm of the carrier protein MbtL. The polypeptide is Medium/long-chain-fatty-acid--[acyl-carrier-protein] ligase MbtM (mbtM) (Mycolicibacterium paratuberculosis (strain ATCC BAA-968 / K-10) (Mycobacterium paratuberculosis)).